Reading from the N-terminus, the 425-residue chain is Enolase (425 aa).

Glutamine 163 serves as a coordination point for (2R)-2-phosphoglycerate. The active-site Proton donor is glutamate 205. Positions 242, 285, and 312 each coordinate Mg(2+). (2R)-2-phosphoglycerate is bound by residues lysine 337, arginine 366, serine 367, and lysine 388. Lysine 337 acts as the Proton acceptor in catalysis.

This sequence belongs to the enolase family. Requires Mg(2+) as cofactor.

It localises to the cytoplasm. Its subcellular location is the secreted. The protein resides in the cell surface. The enzyme catalyses (2R)-2-phosphoglycerate = phosphoenolpyruvate + H2O. It participates in carbohydrate degradation; glycolysis; pyruvate from D-glyceraldehyde 3-phosphate: step 4/5. Functionally, catalyzes the reversible conversion of 2-phosphoglycerate (2-PG) into phosphoenolpyruvate (PEP). It is essential for the degradation of carbohydrates via glycolysis. In Rhodospirillum rubrum (strain ATCC 11170 / ATH 1.1.1 / DSM 467 / LMG 4362 / NCIMB 8255 / S1), this protein is Enolase.